A 310-amino-acid polypeptide reads, in one-letter code: U-megalopygitoxin(8)-Mo15 (310 aa).

A signal peptide spans 1 to 27 (MARFSSKNLTKLFQYLVLSLLSPVAFG).

The protein belongs to the megalysin family. Contains 3 disulfide bonds. In terms of tissue distribution, expressed by the venom apparatus.

Its subcellular location is the secreted. It is found in the target cell membrane. Its function is as follows. May function as a large pore-forming protein. The polypeptide is U-megalopygitoxin(8)-Mo15 (Megalopyge opercularis (Southern flannel moth)).